The sequence spans 416 residues: Serine hydroxymethyltransferase (416 aa).

Residues Leu117 and 121 to 123 (GHL) each bind (6S)-5,6,7,8-tetrahydrofolate. Lys226 is subject to N6-(pyridoxal phosphate)lysine.

Belongs to the SHMT family. Homodimer. It depends on pyridoxal 5'-phosphate as a cofactor.

It localises to the cytoplasm. It catalyses the reaction (6R)-5,10-methylene-5,6,7,8-tetrahydrofolate + glycine + H2O = (6S)-5,6,7,8-tetrahydrofolate + L-serine. Its pathway is one-carbon metabolism; tetrahydrofolate interconversion. The protein operates within amino-acid biosynthesis; glycine biosynthesis; glycine from L-serine: step 1/1. Catalyzes the reversible interconversion of serine and glycine with tetrahydrofolate (THF) serving as the one-carbon carrier. This reaction serves as the major source of one-carbon groups required for the biosynthesis of purines, thymidylate, methionine, and other important biomolecules. Also exhibits THF-independent aldolase activity toward beta-hydroxyamino acids, producing glycine and aldehydes, via a retro-aldol mechanism. This chain is Serine hydroxymethyltransferase, found in Leptospira biflexa serovar Patoc (strain Patoc 1 / Ames).